The sequence spans 465 residues: Sperm microtubule associated protein 2-like (465 aa).

The span at 1 to 29 (MENQEFLSSSAPSEVTDGQVSTEISTCSE) shows a compositional bias: polar residues. Positions 1–140 (MENQEFLSSS…REAKETELLP (140 aa)) are disordered. Composition is skewed to basic and acidic residues over residues 40–70 (LDTH…QDQR) and 114–137 (KARE…KETE). 8 THEG repeats span residues 174 to 192 (RKCF…PKKQ), 214 to 233 (GALK…PKEV), 260 to 279 (PALF…PNGF), 297 to 316 (SLRI…AKGT), 333 to 352 (STLS…PRIK), 373 to 392 (AAMI…SKSV), 409 to 428 (ATTH…PNKR), and 446 to 465 (AALK…PLTR).

The polypeptide is Sperm microtubule associated protein 2-like (Homo sapiens (Human)).